A 229-amino-acid chain; its full sequence is Potassium/proton antiporter CemA (229 aa).

Transmembrane regions (helical) follow at residues phenylalanine 7–valine 27, isoleucine 107–glycine 127, and isoleucine 189–isoleucine 209.

The protein belongs to the CemA family.

It localises to the plastid. Its subcellular location is the chloroplast inner membrane. The enzyme catalyses K(+)(in) + H(+)(out) = K(+)(out) + H(+)(in). Functionally, contributes to K(+)/H(+) antiport activity by supporting proton efflux to control proton extrusion and homeostasis in chloroplasts in a light-dependent manner to modulate photosynthesis. Prevents excessive induction of non-photochemical quenching (NPQ) under continuous-light conditions. Indirectly promotes efficient inorganic carbon uptake into chloroplasts. The protein is Potassium/proton antiporter CemA of Atropa belladonna (Belladonna).